Consider the following 487-residue polypeptide: Calcium-dependent mitochondrial ATP-magnesium/phosphate carrier protein 2 (487 aa).

At 1–211 (MEATKSSKQN…ISKHIKRSNY (211 aa)) the chain is on the mitochondrial intermembrane side. 4 consecutive EF-hand domains span residues 36-71 (ERDLRIRSLFSFFDSENVGYLDCAQIEKGLCALQIP), 72-107 (SGYKYAKELFRVCDANRDGRVDYHEFRRYMDDKELE), 108-138 (LYRIFQAIDVEHNGCISPEGLWDSLVKAGIE), and 139-174 (IKDEELARFVEHVDKDNDGIIMFEEWRDFLLLYPHE). Residues Asp85, Asn87, Asp89, Arg91, and Glu96 each coordinate Ca(2+). Residues Asp152, Asp154, Asp156, and Glu163 each contribute to the Ca(2+) site. Solcar repeat units follow at residues 206-289 (IKRS…FKNA), 301-389 (IGTT…LKDL), and 400-483 (PGPL…MKKS). A helical membrane pass occupies residues 212–229 (FIAGGIAGAASRTATAPL). Residues 230-263 (DRLKVLLQIQKTDARIREAIKLIWKQGGVRGFFR) lie on the Mitochondrial matrix side of the membrane. The helical transmembrane segment at 264–283 (GNGLNIVKVAPESAIKFYAY) threads the bilayer. Residues 284–310 (ELFKNAIGENMGEDKADIGTTVRLFAG) are Mitochondrial intermembrane-facing. A helical membrane pass occupies residues 311–324 (GMAGAVAQASIYPL). Residues 325 to 363 (DLVKTRLQTYTSQAGVAVPRLGTLTKDILVHEGPRAFYK) are Mitochondrial matrix-facing. A helical transmembrane segment spans residues 364 to 383 (GLFPSLLGIIPYAGIDLAAY). At 384–405 (ETLKDLSRTYILQDAEPGPLVQ) the chain is on the mitochondrial intermembrane side. The helical transmembrane segment at 406–423 (LGCGTISGALGATCVYPL) threads the bilayer. Over 424 to 457 (QVVRTRMQAERARTSMSGVFRRTISEEGYRALYK) the chain is Mitochondrial matrix. A helical membrane pass occupies residues 458–477 (GLLPNLLKVVPAASITYMVY). Topologically, residues 478 to 487 (EAMKKSLELD) are mitochondrial intermembrane.

This sequence belongs to the mitochondrial carrier (TC 2.A.29) family. Expressed in flowers, leaves, stems, roots and seedlings, mostly in aerial parts.

It localises to the mitochondrion inner membrane. Counter-exchange transport activity is saturable and inhibited by pyridoxal-5'-phosphate, EDTA and EGTA. Activated by calcium Ca(2+) and manganese Mn(2+) ions, and slightly by iron Fe(2+) and zinc Zn(2+) ions. Repressed by copper ions Cu(2+) and slightly by magnesium Mg(2+) ions. Magnesium Mg(2+) ions promotes slightly ATP uptake, ATP-Mg(2+) being exchanged with ATP(4-). Its function is as follows. Calcium-dependent mitochondrial carrier protein that catalyzes the import of ATP co-transported with metal divalent cations across the mitochondrial inner membrane in exchange for phosphate (Pi). Can transport phosphate, AMP, ADP, ATP, adenosine 5'-phosphosulfate, sulfate and thiosulfate, and, to a lesser extent, other nucleotides. Binds calcium ions Ca(2+). Also mediates calcium uptake. The protein is Calcium-dependent mitochondrial ATP-magnesium/phosphate carrier protein 2 of Arabidopsis thaliana (Mouse-ear cress).